The primary structure comprises 91 residues: Small ribosomal subunit protein uS19 (91 aa).

It belongs to the universal ribosomal protein uS19 family.

Protein S19 forms a complex with S13 that binds strongly to the 16S ribosomal RNA. This is Small ribosomal subunit protein uS19 from Methylobacillus flagellatus (strain ATCC 51484 / DSM 6875 / VKM B-1610 / KT).